A 703-amino-acid polypeptide reads, in one-letter code: Protein O-mannosyl-transferase TMEM260 (703 aa).

8 helical membrane passes run 20 to 40 (GALRGSVAVFASVAAVFTLTL), 68 to 88 (PLFTLLASLTITLFPFGSVAY), 90 to 110 (VNLLCGLFGAVAASLLFYTVF), 137 to 157 (IAAEVFSLNNLFVGLLMALTV), 182 to 202 (SLCNQHTIVLYILCIIPWILF), 218 to 238 (LTLAFSAGLLPYVYLPVSSYL), 314 to 334 (KSSVVWLFTGMLCLYSLFFAW), and 352 to 372 (FWLQSNAVVAVLAGLGLATLV). N-linked (GlcNAc...) asparagine glycans are attached at residues Asn403 and Asn564.

This sequence belongs to the glycosyltransferase 117 (GT117) family.

The protein localises to the endoplasmic reticulum membrane. It catalyses the reaction a di-trans,poly-cis-dolichyl beta-D-mannosyl phosphate + L-seryl-[protein] = 3-O-(alpha-D-mannosyl)-L-seryl-[protein] + a di-trans,poly-cis-dolichyl phosphate + H(+). It carries out the reaction a di-trans,poly-cis-dolichyl beta-D-mannosyl phosphate + L-threonyl-[protein] = 3-O-(alpha-D-mannosyl)-L-threonyl-[protein] + a di-trans,poly-cis-dolichyl phosphate + H(+). O-mannosyl-transferase that transfers mannosyl residues to the hydroxyl group of serine or threonine residues of proteins. Specifically glycosylates the IPT/TIG domain of target proteins, such as MET and MST1R/RON. TMEM260-mediated O-mannosylated residues are composed of single mannose glycans that are not elongated or modified. The polypeptide is Protein O-mannosyl-transferase TMEM260 (Mus musculus (Mouse)).